The primary structure comprises 248 residues: Probable transcriptional regulatory protein Mrad2831_3553 (248 aa).

Belongs to the TACO1 family.

The protein resides in the cytoplasm. The chain is Probable transcriptional regulatory protein Mrad2831_3553 from Methylobacterium radiotolerans (strain ATCC 27329 / DSM 1819 / JCM 2831 / NBRC 15690 / NCIMB 10815 / 0-1).